The following is a 367-amino-acid chain: Alginate lyase (367 aa).

The signal sequence occupies residues 1–24 (MTIFKRISSPALLALALFGGAAHA). Substrate contacts are provided by residues 63 to 64 (SK), 136 to 137 (HT), and Tyr-254.

It belongs to the polysaccharide lyase 5 family.

It localises to the periplasm. The catalysed reaction is Eliminative cleavage of alginate to give oligosaccharides with 4-deoxy-alpha-L-erythro-hex-4-enuronosyl groups at their non-reducing ends and beta-D-mannuronate at their reducing end.. In terms of biological role, catalyzes the depolymerization of alginate by cleaving the beta-1,4 glycosidic bond between two adjacent sugar residues via a beta-elimination mechanism. May serve to degrade mislocalized alginate that is trapped in the periplasmic space. In Pseudomonas putida (strain ATCC 700007 / DSM 6899 / JCM 31910 / BCRC 17059 / LMG 24140 / F1), this protein is Alginate lyase.